Here is a 129-residue protein sequence, read N- to C-terminus: RxLR effector protein SFI6 (129 aa).

A signal peptide spans 1 to 16 (MTLVVLATGLLASGTA). The RxLR-dEER signature appears at 42–64 (RFLRSHQITDDKVEINEHGEEER).

It belongs to the RxLR effector family.

It localises to the secreted. The protein localises to the host cytoplasm. The protein resides in the host cell membrane. Effector that suppresses flg22-induced post-translational MAP kinase activation in tomato but not in Arabidopsis. The perception of highly conserved pathogen- or microbe-associated molecular patterns (PAMPs/MAMPs), such as flg22, triggers converging signaling pathways recruiting MAP kinase cascades and inducing transcriptional re-programming, yielding a generic antimicrobial response. The sequence is that of RxLR effector protein SFI6 from Phytophthora infestans (strain T30-4) (Potato late blight agent).